The sequence spans 299 residues: ATP phosphoribosyltransferase (299 aa).

Belongs to the ATP phosphoribosyltransferase family. Long subfamily. It depends on Mg(2+) as a cofactor.

The protein resides in the cytoplasm. It carries out the reaction 1-(5-phospho-beta-D-ribosyl)-ATP + diphosphate = 5-phospho-alpha-D-ribose 1-diphosphate + ATP. It functions in the pathway amino-acid biosynthesis; L-histidine biosynthesis; L-histidine from 5-phospho-alpha-D-ribose 1-diphosphate: step 1/9. With respect to regulation, feedback inhibited by histidine. Functionally, catalyzes the condensation of ATP and 5-phosphoribose 1-diphosphate to form N'-(5'-phosphoribosyl)-ATP (PR-ATP). Has a crucial role in the pathway because the rate of histidine biosynthesis seems to be controlled primarily by regulation of HisG enzymatic activity. The protein is ATP phosphoribosyltransferase of Shewanella loihica (strain ATCC BAA-1088 / PV-4).